The sequence spans 261 residues: Cytochrome c oxidase subunit 3 (261 aa).

At 1–15 (MTHQTHAYHTVNPSP) the chain is on the mitochondrial matrix side. Residues 16–34 (WPLTGALSALLMTSGLIMW) traverse the membrane as a helical segment. Topologically, residues 35–40 (FHFNSP) are mitochondrial intermembrane. Residues 41–66 (LLLVLGLTTNFLTMYQWWRDIIREST) form a helical membrane-spanning segment. The Mitochondrial matrix segment spans residues 67–72 (FQGHHT). A helical transmembrane segment spans residues 73–105 (TIVQKGLRYGMILFIVSEVFFFAGFFWAFYHSS). Over 106–128 (LAPTPELGGCWPPTGINPLNPLE) the chain is Mitochondrial intermembrane. Residues 129 to 152 (VPLLNTSVLLASGVSITWAHHSLM) traverse the membrane as a helical segment. At 153 to 155 (EGH) the chain is on the mitochondrial matrix side. A helical transmembrane segment spans residues 156-183 (RKHMLQALFITIALGVYFTLLQASEYYE). The Mitochondrial intermembrane portion of the chain corresponds to 184-190 (APFTISD). Residues 191 to 223 (GIYGSTFFVATGFHGLHVIIGSSFLIVCFMRQL) form a helical membrane-spanning segment. The Mitochondrial matrix segment spans residues 224–232 (KFHFTSSHH). Residues 233-256 (FGFEAAAWYWHFVDVVWLFLYVSI) form a helical membrane-spanning segment. The Mitochondrial intermembrane segment spans residues 257-261 (YWWGS).

The protein belongs to the cytochrome c oxidase subunit 3 family. In terms of assembly, component of the cytochrome c oxidase (complex IV, CIV), a multisubunit enzyme composed of 14 subunits. The complex is composed of a catalytic core of 3 subunits MT-CO1, MT-CO2 and MT-CO3, encoded in the mitochondrial DNA, and 11 supernumerary subunits COX4I, COX5A, COX5B, COX6A, COX6B, COX6C, COX7A, COX7B, COX7C, COX8 and NDUFA4, which are encoded in the nuclear genome. The complex exists as a monomer or a dimer and forms supercomplexes (SCs) in the inner mitochondrial membrane with NADH-ubiquinone oxidoreductase (complex I, CI) and ubiquinol-cytochrome c oxidoreductase (cytochrome b-c1 complex, complex III, CIII), resulting in different assemblies (supercomplex SCI(1)III(2)IV(1) and megacomplex MCI(2)III(2)IV(2)).

The protein localises to the mitochondrion inner membrane. It carries out the reaction 4 Fe(II)-[cytochrome c] + O2 + 8 H(+)(in) = 4 Fe(III)-[cytochrome c] + 2 H2O + 4 H(+)(out). Component of the cytochrome c oxidase, the last enzyme in the mitochondrial electron transport chain which drives oxidative phosphorylation. The respiratory chain contains 3 multisubunit complexes succinate dehydrogenase (complex II, CII), ubiquinol-cytochrome c oxidoreductase (cytochrome b-c1 complex, complex III, CIII) and cytochrome c oxidase (complex IV, CIV), that cooperate to transfer electrons derived from NADH and succinate to molecular oxygen, creating an electrochemical gradient over the inner membrane that drives transmembrane transport and the ATP synthase. Cytochrome c oxidase is the component of the respiratory chain that catalyzes the reduction of oxygen to water. Electrons originating from reduced cytochrome c in the intermembrane space (IMS) are transferred via the dinuclear copper A center (CU(A)) of subunit 2 and heme A of subunit 1 to the active site in subunit 1, a binuclear center (BNC) formed by heme A3 and copper B (CU(B)). The BNC reduces molecular oxygen to 2 water molecules using 4 electrons from cytochrome c in the IMS and 4 protons from the mitochondrial matrix. The protein is Cytochrome c oxidase subunit 3 (MT-CO3) of Dasypus novemcinctus (Nine-banded armadillo).